The sequence spans 325 residues: Glutarate 2-hydroxylase (325 aa).

Residues His160, Asp162, and His292 each coordinate Fe cation.

It belongs to the glutarate hydroxylase family. Homotetramer. Fe(2+) serves as cofactor.

It carries out the reaction glutarate + 2-oxoglutarate + O2 = (S)-2-hydroxyglutarate + succinate + CO2. The protein operates within amino-acid degradation. Functionally, acts as an alpha-ketoglutarate-dependent dioxygenase catalyzing hydroxylation of glutarate (GA) to L-2-hydroxyglutarate (L2HG). Functions in a L-lysine degradation pathway that proceeds via cadaverine, glutarate and L-2-hydroxyglutarate. The chain is Glutarate 2-hydroxylase from Pseudomonas putida (strain ATCC 700007 / DSM 6899 / JCM 31910 / BCRC 17059 / LMG 24140 / F1).